The primary structure comprises 174 residues: UPF0316 protein lmo1776 (174 aa).

A run of 3 helical transmembrane segments spans residues 4-24 (GIFI…IYTV), 36-56 (LAAL…SLVL), and 62-82 (IANV…GMKI).

The protein belongs to the UPF0316 family.

It is found in the cell membrane. In Listeria monocytogenes serovar 1/2a (strain ATCC BAA-679 / EGD-e), this protein is UPF0316 protein lmo1776.